A 441-amino-acid polypeptide reads, in one-letter code: Homogentisate 1,2-dioxygenase (441 aa).

H297 acts as the Proton acceptor in catalysis. Residues H340 and E346 each contribute to the Fe cation site. Y355 and H376 together coordinate homogentisate. Fe cation is bound at residue H376.

This sequence belongs to the homogentisate dioxygenase family. Hexamer; dimer of trimers. The cofactor is Fe cation.

The enzyme catalyses homogentisate + O2 = 4-maleylacetoacetate + H(+). Its pathway is amino-acid degradation; L-phenylalanine degradation; acetoacetate and fumarate from L-phenylalanine: step 4/6. Involved in the catabolism of homogentisate (2,5-dihydroxyphenylacetate or 2,5-OH-PhAc), a central intermediate in the degradation of phenylalanine and tyrosine. Catalyzes the oxidative ring cleavage of the aromatic ring of homogentisate to yield maleylacetoacetate. In Streptomyces coelicolor (strain ATCC BAA-471 / A3(2) / M145), this protein is Homogentisate 1,2-dioxygenase.